Reading from the N-terminus, the 79-residue chain is DNA-directed RNA polymerase subunit omega (79 aa).

This sequence belongs to the RNA polymerase subunit omega family. The RNAP catalytic core consists of 2 alpha, 1 beta, 1 beta' and 1 omega subunit. When a sigma factor is associated with the core the holoenzyme is formed, which can initiate transcription.

The catalysed reaction is RNA(n) + a ribonucleoside 5'-triphosphate = RNA(n+1) + diphosphate. Functionally, promotes RNA polymerase assembly. Latches the N- and C-terminal regions of the beta' subunit thereby facilitating its interaction with the beta and alpha subunits. The sequence is that of DNA-directed RNA polymerase subunit omega from Thermotoga petrophila (strain ATCC BAA-488 / DSM 13995 / JCM 10881 / RKU-1).